A 299-amino-acid polypeptide reads, in one-letter code: Probable 3-hydroxyisobutyrate dehydrogenase-like 2, mitochondrial (299 aa).

NAD(+)-binding positions include 14 to 43 (TRIG…TVYA) and Ser108. Lys182 is an active-site residue. Lys250 lines the NAD(+) pocket.

Belongs to the HIBADH-related family. 3-hydroxyisobutyrate dehydrogenase subfamily.

It is found in the mitochondrion. It catalyses the reaction 3-hydroxy-2-methylpropanoate + NAD(+) = 2-methyl-3-oxopropanoate + NADH + H(+). It participates in amino-acid degradation; L-valine degradation. The sequence is that of Probable 3-hydroxyisobutyrate dehydrogenase-like 2, mitochondrial from Arabidopsis thaliana (Mouse-ear cress).